A 213-amino-acid chain; its full sequence is Glycerol-3-phosphate acyltransferase (213 aa).

A run of 6 helical transmembrane segments spans residues 3–23 (ILLL…LWIG), 55–75 (ITFL…IWLG), 80–100 (SPLI…FTGF), 110–130 (AGVL…VFAL), 142–162 (SITA…IHFL), and 163–183 (LDGY…VIIF).

It belongs to the PlsY family. In terms of assembly, probably interacts with PlsX.

The protein resides in the cell membrane. The enzyme catalyses an acyl phosphate + sn-glycerol 3-phosphate = a 1-acyl-sn-glycero-3-phosphate + phosphate. It participates in lipid metabolism; phospholipid metabolism. In terms of biological role, catalyzes the transfer of an acyl group from acyl-phosphate (acyl-PO(4)) to glycerol-3-phosphate (G3P) to form lysophosphatidic acid (LPA). This enzyme utilizes acyl-phosphate as fatty acyl donor, but not acyl-CoA or acyl-ACP. This chain is Glycerol-3-phosphate acyltransferase, found in Streptococcus thermophilus (strain CNRZ 1066).